The chain runs to 123 residues: Large ribosomal subunit protein bL12 (123 aa).

Belongs to the bacterial ribosomal protein bL12 family. Homodimer. Part of the ribosomal stalk of the 50S ribosomal subunit. Forms a multimeric L10(L12)X complex, where L10 forms an elongated spine to which 2 to 4 L12 dimers bind in a sequential fashion. Binds GTP-bound translation factors.

Its function is as follows. Forms part of the ribosomal stalk which helps the ribosome interact with GTP-bound translation factors. Is thus essential for accurate translation. This chain is Large ribosomal subunit protein bL12, found in Albidiferax ferrireducens (strain ATCC BAA-621 / DSM 15236 / T118) (Rhodoferax ferrireducens).